A 56-amino-acid chain; its full sequence is Large ribosomal subunit protein bL33 (56 aa).

Residues 1-12 show a composition bias toward basic and acidic residues; that stretch reads MASKGGRDKIKL. A disordered region spans residues 1–28; that stretch reads MASKGGRDKIKLESTAGTGHFYTTTKNK. The segment covering 15–25 has biased composition (polar residues); it reads TAGTGHFYTTT.

It belongs to the bacterial ribosomal protein bL33 family.

This chain is Large ribosomal subunit protein bL33, found in Cupriavidus necator (strain ATCC 17699 / DSM 428 / KCTC 22496 / NCIMB 10442 / H16 / Stanier 337) (Ralstonia eutropha).